Here is a 1180-residue protein sequence, read N- to C-terminus: DNA-directed RNA polymerase subunit beta (1180 aa).

It belongs to the RNA polymerase beta chain family. As to quaternary structure, the RNAP catalytic core consists of 2 alpha, 1 beta, 1 beta' and 1 omega subunit. When a sigma factor is associated with the core the holoenzyme is formed, which can initiate transcription.

The catalysed reaction is RNA(n) + a ribonucleoside 5'-triphosphate = RNA(n+1) + diphosphate. Functionally, DNA-dependent RNA polymerase catalyzes the transcription of DNA into RNA using the four ribonucleoside triphosphates as substrates. The polypeptide is DNA-directed RNA polymerase subunit beta (Macrococcus caseolyticus (strain JCSC5402) (Macrococcoides caseolyticum)).